The following is a 217-amino-acid chain: Protein-L-isoaspartate O-methyltransferase 2 (217 aa).

The active site involves serine 62.

Belongs to the methyltransferase superfamily. L-isoaspartyl/D-aspartyl protein methyltransferase family.

The protein localises to the cytoplasm. It carries out the reaction [protein]-L-isoaspartate + S-adenosyl-L-methionine = [protein]-L-isoaspartate alpha-methyl ester + S-adenosyl-L-homocysteine. In terms of biological role, catalyzes the methyl esterification of L-isoaspartyl residues in peptides and proteins that result from spontaneous decomposition of normal L-aspartyl and L-asparaginyl residues. It plays a role in the repair and/or degradation of damaged proteins. This is Protein-L-isoaspartate O-methyltransferase 2 from Geotalea uraniireducens (strain Rf4) (Geobacter uraniireducens).